The sequence spans 505 residues: ATP synthase subunit alpha (505 aa).

169 to 176 (GDRKTGKT) contributes to the ATP binding site.

This sequence belongs to the ATPase alpha/beta chains family. As to quaternary structure, F-type ATPases have 2 components, CF(1) - the catalytic core - and CF(0) - the membrane proton channel. CF(1) has five subunits: alpha(3), beta(3), gamma(1), delta(1), epsilon(1). CF(0) has three main subunits: a(1), b(2) and c(9-12). The alpha and beta chains form an alternating ring which encloses part of the gamma chain. CF(1) is attached to CF(0) by a central stalk formed by the gamma and epsilon chains, while a peripheral stalk is formed by the delta and b chains.

It is found in the cell membrane. It carries out the reaction ATP + H2O + 4 H(+)(in) = ADP + phosphate + 5 H(+)(out). Functionally, produces ATP from ADP in the presence of a proton gradient across the membrane. The alpha chain is a regulatory subunit. This is ATP synthase subunit alpha from Leuconostoc mesenteroides subsp. mesenteroides (strain ATCC 8293 / DSM 20343 / BCRC 11652 / CCM 1803 / JCM 6124 / NCDO 523 / NBRC 100496 / NCIMB 8023 / NCTC 12954 / NRRL B-1118 / 37Y).